The following is a 1480-amino-acid chain: Cystic fibrosis transmembrane conductance regulator (1480 aa).

Topologically, residues methionine 1 to phenylalanine 77 are cytoplasmic. The chain crosses the membrane as a helical span at residues phenylalanine 78–glutamine 98. The region spanning phenylalanine 81–leucine 365 is the ABC transmembrane type-1 1 domain. The Extracellular segment spans residues proline 99 to tyrosine 122. A helical membrane pass occupies residues leucine 123 to histidine 146. The Cytoplasmic portion of the chain corresponds to histidine 147–leucine 195. Residues alanine 196 to tryptophan 216 form a helical membrane-spanning segment. Topologically, residues glutamate 217 to serine 222 are extracellular. A helical membrane pass occupies residues valine 223–methionine 243. Topologically, residues methionine 244 to lysine 298 are cytoplasmic. Residues alanine 299 to phenylalanine 319 form a helical membrane-spanning segment. Residues leucine 320 to threonine 339 lie on the Extracellular side of the membrane. The chain crosses the membrane as a helical span at residues isoleucine 340–valine 358. At glutamine 359–serine 858 the chain is on the cytoplasmic side. Residues tryptophan 401, serine 434, glycine 458–threonine 465, and glutamine 493 contribute to the ATP site. Residues asparagine 423 to glycine 646 enclose the ABC transporter 1 domain. Cysteine 524 is lipidated: S-palmitoyl cysteine. Phosphoserine occurs at positions 549 and 660. The segment at serine 654–glutamate 831 is disordered R region. Position 670 is a phosphoserine; by PKA (serine 670). Serine 686 is modified (phosphoserine). A Glycyl lysine isopeptide (Lys-Gly) (interchain with G-Cter in ubiquitin) cross-link involves residue lysine 688. A phosphoserine mark is found at serine 700 and serine 712. Threonine 717 is modified (phosphothreonine). Residues serine 737, serine 753, serine 768, serine 790, serine 795, and serine 813 each carry the phosphoserine modification. Residues leucine 859–valine 879 traverse the membrane as a helical segment. In terms of domain architecture, ABC transmembrane type-1 2 spans leucine 859 to serine 1155. The Extracellular segment spans residues valine 880–isoleucine 918. Asparagine 894, asparagine 900, and asparagine 909 each carry an N-linked (GlcNAc...) asparagine glycan. A discontinuously helical membrane pass occupies residues tyrosine 919–histidine 939. The Cytoplasmic portion of the chain corresponds to threonine 940–threonine 990. A helical transmembrane segment spans residues isoleucine 991–leucine 1011. The Extracellular portion of the chain corresponds to glutamine 1012–proline 1013. The helical transmembrane segment at tyrosine 1014–leucine 1034 threads the bilayer. The Cytoplasmic portion of the chain corresponds to glutamine 1035–threonine 1095. Residues leucine 1096–phenylalanine 1116 traverse the membrane as a helical segment. Over isoleucine 1117–glycine 1130 the chain is Extracellular. A helical transmembrane segment spans residues isoleucine 1131–isoleucine 1151. At aspartate 1152–leucine 1480 the chain is on the cytoplasmic side. The 234-residue stretch at methionine 1210–histidine 1443 folds into the ABC transporter 2 domain. ATP-binding positions include tyrosine 1219 and glycine 1244–serine 1251. The tract at residues arginine 1386–leucine 1480 is interaction with GORASP2. The S-palmitoyl cysteine moiety is linked to residue cysteine 1395. Residues serine 1444 and serine 1456 each carry the phosphoserine modification. Residues histidine 1452–leucine 1480 are disordered. A compositionally biased stretch (acidic residues) spans glutamate 1470–leucine 1480. The PDZ-binding signature appears at threonine 1478 to leucine 1480.

The protein belongs to the ABC transporter superfamily. ABCC family. CFTR transporter (TC 3.A.1.202) subfamily. In terms of assembly, monomer; does not require oligomerization for channel activity. May form oligomers in the membrane. Interacts with SLC26A3, SLC26A6 and NHERF1. Interacts with SHANK2. Interacts with MYO6. Interacts (via C-terminus) with GOPC (via PDZ domain); this promotes CFTR internalization and thereby decreases channel activity. Interacts with SLC4A7 through NHERF1. Found in a complex with MYO5B and RAB11A. Interacts with ANO1. Interacts with SLC26A8. Interacts with AHCYL1; the interaction increases CFTR activity. Interacts with CSE1L. The core-glycosylated form interacts with GORASP2 (via PDZ GRASP-type 1 domain) in respone to ER stress. Interacts with MARCHF2; the interaction leads to CFTR ubiqtuitination and degradation. Interacts with ADGRG2. N-glycosylated. Post-translationally, phosphorylated; cAMP treatment promotes phosphorylation and activates the channel. Dephosphorylation decreases the ATPase activity (in vitro). Phosphorylation at PKA sites activates the channel. Phosphorylation at PKC sites enhances the response to phosphorylation by PKA. Phosphorylated by AMPK; this inhibits channel activity. In terms of processing, ubiquitinated, leading to its degradation in the lysosome. Deubiquitination by USP10 in early endosomes enhances its endocytic recycling to the cell membrane. Ubiquitinated by RNF185 during ER stress. Ubiquitinated by MARCHF2.

It localises to the apical cell membrane. The protein localises to the early endosome membrane. It is found in the cell membrane. The protein resides in the recycling endosome membrane. Its subcellular location is the endoplasmic reticulum membrane. It localises to the nucleus. The catalysed reaction is ATP + H2O + closed Cl(-) channel = ADP + phosphate + open Cl(-) channel.. The enzyme catalyses chloride(in) = chloride(out). It carries out the reaction hydrogencarbonate(in) = hydrogencarbonate(out). It catalyses the reaction ATP + H2O = ADP + phosphate + H(+). In terms of biological role, epithelial ion channel that plays an important role in the regulation of epithelial ion and water transport and fluid homeostasis. Mediates the transport of chloride ions across the cell membrane. Possesses an intrinsic ATPase activity and utilizes ATP to gate its channel; the passive flow of anions through the channel is gated by cycles of ATP binding and hydrolysis by the ATP-binding domains. The ion channel is also permeable to HCO(3)(-); selectivity depends on the extracellular chloride concentration. Exerts its function also by modulating the activity of other ion channels and transporters. Contributes to the regulation of the pH and the ion content of the epithelial fluid layer. Modulates the activity of the epithelial sodium channel (ENaC) complex, in part by regulating the cell surface expression of the ENaC complex. May regulate bicarbonate secretion and salvage in epithelial cells by regulating the transporter SLC4A7. Can inhibit the chloride channel activity of ANO1. Plays a role in the chloride and bicarbonate homeostasis during sperm epididymal maturation and capacitation. This chain is Cystic fibrosis transmembrane conductance regulator, found in Plecturocebus moloch (Dusky titi monkey).